The sequence spans 547 residues: Chaperonin GroEL (547 aa).

ATP contacts are provided by residues 30 to 33, K51, 87 to 91, G415, 479 to 481, and D495; these read TLGP, DGTTT, and NAA.

Belongs to the chaperonin (HSP60) family. In terms of assembly, forms a cylinder of 14 subunits composed of two heptameric rings stacked back-to-back. Interacts with the co-chaperonin GroES.

It localises to the cytoplasm. The catalysed reaction is ATP + H2O + a folded polypeptide = ADP + phosphate + an unfolded polypeptide.. Together with its co-chaperonin GroES, plays an essential role in assisting protein folding. The GroEL-GroES system forms a nano-cage that allows encapsulation of the non-native substrate proteins and provides a physical environment optimized to promote and accelerate protein folding. This chain is Chaperonin GroEL, found in Pseudomonas syringae pv. tomato (strain ATCC BAA-871 / DC3000).